The chain runs to 188 residues: UPF0301 protein CPn_0139/CP_0633/CPj0139/CpB0140 (188 aa).

This sequence belongs to the UPF0301 (AlgH) family.

The polypeptide is UPF0301 protein CPn_0139/CP_0633/CPj0139/CpB0140 (Chlamydia pneumoniae (Chlamydophila pneumoniae)).